We begin with the raw amino-acid sequence, 378 residues long: Succinyl-diaminopimelate desuccinylase (378 aa).

His67 serves as a coordination point for Zn(2+). Asp69 is an active-site residue. A Zn(2+)-binding site is contributed by Asp100. Residue Glu134 is the Proton acceptor of the active site. Positions 135, 163, and 349 each coordinate Zn(2+).

It belongs to the peptidase M20A family. DapE subfamily. Homodimer. Zn(2+) serves as cofactor. Requires Co(2+) as cofactor.

It catalyses the reaction N-succinyl-(2S,6S)-2,6-diaminopimelate + H2O = (2S,6S)-2,6-diaminopimelate + succinate. It participates in amino-acid biosynthesis; L-lysine biosynthesis via DAP pathway; LL-2,6-diaminopimelate from (S)-tetrahydrodipicolinate (succinylase route): step 3/3. Catalyzes the hydrolysis of N-succinyl-L,L-diaminopimelic acid (SDAP), forming succinate and LL-2,6-diaminopimelate (DAP), an intermediate involved in the bacterial biosynthesis of lysine and meso-diaminopimelic acid, an essential component of bacterial cell walls. This is Succinyl-diaminopimelate desuccinylase from Pasteurella multocida (strain Pm70).